The chain runs to 172 residues: Adenine phosphoribosyltransferase (172 aa).

The protein belongs to the purine/pyrimidine phosphoribosyltransferase family. In terms of assembly, homodimer.

The protein resides in the cytoplasm. The enzyme catalyses AMP + diphosphate = 5-phospho-alpha-D-ribose 1-diphosphate + adenine. It participates in purine metabolism; AMP biosynthesis via salvage pathway; AMP from adenine: step 1/1. Its function is as follows. Catalyzes a salvage reaction resulting in the formation of AMP, that is energically less costly than de novo synthesis. The polypeptide is Adenine phosphoribosyltransferase (Exiguobacterium sibiricum (strain DSM 17290 / CCUG 55495 / CIP 109462 / JCM 13490 / 255-15)).